The primary structure comprises 473 residues: Glutamate--tRNA ligase (473 aa).

Positions 11–21 (PSPTGFLHIGG) match the 'HIGH' region motif. Residues 240–244 (KLSKR) carry the 'KMSKS' region motif. Lys-243 is a binding site for ATP.

This sequence belongs to the class-I aminoacyl-tRNA synthetase family. Glutamate--tRNA ligase type 1 subfamily. As to quaternary structure, monomer.

It localises to the cytoplasm. The enzyme catalyses tRNA(Glu) + L-glutamate + ATP = L-glutamyl-tRNA(Glu) + AMP + diphosphate. Its function is as follows. Catalyzes the attachment of glutamate to tRNA(Glu) in a two-step reaction: glutamate is first activated by ATP to form Glu-AMP and then transferred to the acceptor end of tRNA(Glu). This is Glutamate--tRNA ligase from Rhodopseudomonas palustris (strain HaA2).